The chain runs to 637 residues: ATP-dependent zinc metalloprotease FtsH (637 aa).

Residues 1–6 (MNNQGR) lie on the Cytoplasmic side of the membrane. A helical transmembrane segment spans residues 7 to 27 (SILAWATLFIFVILLFNVFQS). Topologically, residues 28 to 103 (DSLLGGRNNI…VVPLETRMNT (76 aa)) are periplasmic. Residues 104 to 124 (FLGFLISWFPMLLLIGVWVFF) traverse the membrane as a helical segment. Residues 125-637 (MRQMHGGGKA…TKAKKENYAS (513 aa)) are Cytoplasmic-facing. ATP is bound at residue 195–202 (GPPGTGKT). Zn(2+) is bound at residue His-417. Residue Glu-418 is part of the active site. The Zn(2+) site is built by His-421 and Asp-495. Residues 603 to 637 (ENKFPFNDSSTIKIDKEKSPEKTKTTKAKKENYAS) are disordered. The segment covering 615–637 (KIDKEKSPEKTKTTKAKKENYAS) has biased composition (basic and acidic residues).

This sequence in the central section; belongs to the AAA ATPase family. The protein in the C-terminal section; belongs to the peptidase M41 family. In terms of assembly, homohexamer. Requires Zn(2+) as cofactor.

Its subcellular location is the cell inner membrane. Functionally, acts as a processive, ATP-dependent zinc metallopeptidase for both cytoplasmic and membrane proteins. Plays a role in the quality control of integral membrane proteins. This is ATP-dependent zinc metalloprotease FtsH from Rickettsia conorii (strain ATCC VR-613 / Malish 7).